The sequence spans 598 residues: MAQVAGKKLTVAPEAGKPPGIPGSSSSVKEIPEILVDPRTRRRYLRGRFLGKGGFAKCYEITDLESREVFAGKIVPKTMLLKPHQKDKMTMEIAIQRSLDHRHVVGFHGFFEDNDFVYVVLELCRRRSLLELHKRRKAVTEPEARYYLKQTILGCQYLHSNRVIHRDLKLGNLFLNDEMEVKIGDFGLATKVEYDGERKKTLCGTPNYIAPEVLGKKGHSFEVDIWSIGCIMYTLLVGKPPFETSCLKETYMRIKKNEYSVPKHINPMATALIQKMLRSEPTSRPTIDDLLNDEFFTTGYIPSRLPTTCLTVPPRFSIAPSTIDQSLRKPLTAINKGQDSPLVEKQSVPAKEEEMQQPESTEPADCYLSEMLQQLTCVNAVKPSERAVIRQEEAEDPASVPIFWVSKWVDYSDKYGLGYQLCDNSVGVLFNDSTRLIMYNDGDSLQYIERNNSESYLNVRSYPAALTKKITLLKYFRNYMSEHLLKAGANITPREGDELARLPFLRTWFRTRSAIILHLSNGTVQINFFQDHTKIILCPLMAAVSYIDEKREFHTYKLSLIQEFGCCKELASRLRYARTMVEKLQSSKSGVAHVKASA.

A disordered region spans residues 1–26 (MAQVAGKKLTVAPEAGKPPGIPGSSS). Residues S25 and S26 each carry the phosphoserine modification. In terms of domain architecture, Protein kinase spans 44-296 (YLRGRFLGKG…IDDLLNDEFF (253 aa)). Residues 50-58 (LGKGGFAKC), K73, and E122 each bind ATP. D167 (proton acceptor) is an active-site residue. Residues 169–172 (KLGN) and D185 contribute to the ATP site. Residues 185–212 (DFGLATKVEYDGERKKTLCGTPNYIAPE) are activation loop. T201 carries the phosphothreonine modification. A phosphoserine; by autocatalysis mark is found at S260 and S326. The D-box that targets the protein for proteasomal degradation in anaphase motif lies at 328–331 (RKPL). The disordered stretch occupies residues 336–360 (KGQDSPLVEKQSVPAKEEEMQQPES). The residue at position 340 (S340) is a Phosphoserine. In terms of domain architecture, POLO box 1 spans 404 to 482 (WVSKWVDYSD…LKYFRNYMSE (79 aa)). The tract at residues 487–501 (AGANITPREGDELAR) is linker. One can recognise a POLO box 2 domain in the interval 504-586 (FLRTWFRTRS…ARTMVEKLQS (83 aa)). The important for interaction with phosphorylated proteins stretch occupies residues 532 to 534 (HTK).

Belongs to the protein kinase superfamily. Ser/Thr protein kinase family. In terms of assembly, interacts with plk1 and kif2a. Interacts with fbxo5. In terms of processing, activated by phosphorylation on Thr-201 during M phase. Protein levels are down-regulated by proteasomal degradation in anaphase.

It is found in the nucleus. Its subcellular location is the cytoplasm. It localises to the cytoskeleton. The protein resides in the microtubule organizing center. The protein localises to the centrosome. It is found in the spindle. Its subcellular location is the midbody. The enzyme catalyses L-seryl-[protein] + ATP = O-phospho-L-seryl-[protein] + ADP + H(+). It carries out the reaction L-threonyl-[protein] + ATP = O-phospho-L-threonyl-[protein] + ADP + H(+). Plays multiple essential roles during mitosis. Phosphorylates the N-terminal domain of cdc25, which leads to cyclin b-cdc2 activation and mitotic entry. Also required for organization of bipolar spindles, and for exit from mitosis. Phosphorylates tpx2. This is Serine/threonine-protein kinase PLK1 (plk1) from Xenopus tropicalis (Western clawed frog).